Consider the following 349-residue polypeptide: 5,10-methylenetetrahydromethanopterin reductase (349 aa).

Belongs to the mer family. As to quaternary structure, homotetramer composed of two loosely associated dimers.

Its subcellular location is the cytoplasm. It catalyses the reaction 5-methyl-5,6,7,8-tetrahydromethanopterin + oxidized coenzyme F420-(gamma-L-Glu)(n) + H(+) = 5,10-methylenetetrahydromethanopterin + reduced coenzyme F420-(gamma-L-Glu)(n). Its pathway is one-carbon metabolism; methanogenesis from CO(2); methyl-coenzyme M from 5,10-methylene-5,6,7,8-tetrahydromethanopterin: step 1/2. Its activity is regulated as follows. Requires the presence of relatively high concentrations of either sulfate or phosphate for maximal activity. Catalyzes the reversible reduction of methylene-H(4)MPT to methyl-H(4)MPT. This is 5,10-methylenetetrahydromethanopterin reductase from Methanopyrus kandleri (strain AV19 / DSM 6324 / JCM 9639 / NBRC 100938).